A 184-amino-acid chain; its full sequence is Isopentenyl-diphosphate Delta-isomerase (184 aa).

Mn(2+) contacts are provided by His26 and His33. A Nudix hydrolase domain is found at 31 to 165; the sequence is PLHLAFSCYL…PSAFSPWLGL (135 aa). Cys68 is an active-site residue. His70 lines the Mn(2+) pocket. Residue Glu88 coordinates Mg(2+). Mn(2+) is bound by residues Glu115 and Glu117. The active site involves Glu117.

It belongs to the IPP isomerase type 1 family. Mg(2+) serves as cofactor. It depends on Mn(2+) as a cofactor.

Its subcellular location is the cytoplasm. The enzyme catalyses isopentenyl diphosphate = dimethylallyl diphosphate. The protein operates within isoprenoid biosynthesis; dimethylallyl diphosphate biosynthesis; dimethylallyl diphosphate from isopentenyl diphosphate: step 1/1. In terms of biological role, catalyzes the 1,3-allylic rearrangement of the homoallylic substrate isopentenyl (IPP) to its highly electrophilic allylic isomer, dimethylallyl diphosphate (DMAPP). This is Isopentenyl-diphosphate Delta-isomerase from Paenarthrobacter aurescens (strain TC1).